The chain runs to 466 residues: Catalase ifgD (466 aa).

A disordered region spans residues methionine 1–serine 22. The active site involves histidine 48. Tyrosine 337 lines the heme pocket.

Belongs to the catalase family. Requires heme as cofactor.

It functions in the pathway alkaloid biosynthesis; ergot alkaloid biosynthesis. In terms of biological role, catalase; part of the gene cluster that mediates the biosynthesis of isofumigaclavines, fungal ergot alkaloids. The tryptophan dimethylallyltransferase ifgA catalyzes the first step of ergot alkaloid biosynthesis by condensing dimethylallyl diphosphate (DMAP) and tryptophan to form 4-dimethylallyl-L-tryptophan. The second step is catalyzed by the methyltransferase ifgB that methylates 4-dimethylallyl-L-tryptophan in the presence of S-adenosyl-L-methionine, resulting in the formation of N-methyl-dimethylallyl-L-tryptophan. The catalase ifgD and the FAD-dependent oxidoreductase ifgC then transform N-methyl-dimethylallyl-L-tryptophan to chanoclavine-I which is further oxidized by ifgE in the presence of NAD(+), resulting in the formation of chanoclavine-I aldehyde. The chanoclavine-I aldehyde reductases ifgG and/or fgaOx3 reduce chanoclavine-I aldehyde to dihydrochanoclavine-I aldehyde that spontaneously dehydrates to form 6,8-dimethyl-6,7-didehydroergoline. The festuclavine dehydrogenases ifgF1 and/or ifgF2 then catalyze the reduction of 6,8-dimethyl-6,7-didehydroergoline to form festuclavine. Hydrolysis of festuclavine by a yet undetermined cytochrome P450 monooxygenase (called ifgH) then leads to the formation of isofumigaclavine B which is in turn acetylated by ifgI to isofumigaclavine A. Penicillium roqueforti has interestingly at least two sets of genes for the consumption of chanoclavine-I aldehyde on three different loci, the OYEs ifgG/fgaOx3 and the festuclavine synthase homologs ifgF1/ifgF2. The reason for the duplication of these genes is unclear, probably to ensure the conversion of chanoclavine-I aldehyde by differential gene expression under various environmental conditions. This chain is Catalase ifgD, found in Penicillium roqueforti (strain FM164).